We begin with the raw amino-acid sequence, 81 residues long: Defensin-like protein 43 (81 aa).

An N-terminal signal peptide occupies residues 1 to 27 (MGITKTSVTFLFLLILAAFVSNYNVLA). Disulfide bonds link Cys-40–Cys-79, Cys-44–Cys-67, Cys-53–Cys-77, and Cys-57–Cys-78.

It belongs to the DEFL family.

The protein resides in the secreted. The protein is Defensin-like protein 43 of Arabidopsis thaliana (Mouse-ear cress).